We begin with the raw amino-acid sequence, 552 residues long: MHCERFLCVLRIIGTTLFGVSLLLGITAAYIVGYQFIQTDNYYFSFGLYGAFLASHLIIQSLFAFLEHRKMKKSLETPIKLNKTVALCIAAYQEDPDYLRKCLQSVKRLTYPGIKVVMVIDGNSDDDLYMMDIFSEVMGRDKSVTYIWKNNFHERGPGETEESHKESSQHVTQLVLSNKSICIMQKWGGKREVMYTAFRALGRSVDYVQVCDSDTMLDPASSVEMVKVLEEDPMVGGVGGDVQILNKYDSWISFLSSVRYWMAFNIERACQSYFGCVQCISGPLGMYRNSLLHEFVEDWYNQEFMGNQCSFGDDRHLTNRVLSLGYATKYTARSKCLTETPIEYLRWLNQQTRWSKSYFREWLYNAMWFHKHHLWMTYEAVITGFFPFFLIATVIQLFYRGKIWNILLFLLTVQLVGLIKSSFASCLRGNIVMVFMSLYSVLYMSSLLPAKMFAIATINKAGWGTSGRKTIVVNFIGLIPVSVWFTILLGGVIFTIYKESKKPFSESKQTVLIVGTLIYACYWVVLLTLYVVLINKCGRRKKGQQYDMVLDV.

Topologically, residues methionine 1–arginine 11 are cytoplasmic. A helical membrane pass occupies residues isoleucine 12–valine 32. Residues glycine 33 to serine 45 are Extracellular-facing. A helical membrane pass occupies residues phenylalanine 46 to leucine 66. At glutamate 67–leucine 374 the chain is on the cytoplasmic side. At threonine 110 the chain carries Phosphothreonine. Lysine 190 is covalently cross-linked (Glycyl lysine isopeptide (Lys-Gly) (interchain with G-Cter in ubiquitin)). The O-linked (GlcNAc) serine glycan is linked to serine 221. Phosphothreonine is present on threonine 328. Residues tryptophan 375 to isoleucine 395 traverse the membrane as a helical segment. The Extracellular portion of the chain corresponds to glutamine 396–lysine 402. The chain crosses the membrane as a helical span at residues isoleucine 403–phenylalanine 423. At alanine 424–glycine 429 the chain is on the cytoplasmic side. Residues asparagine 430 to alanine 450 traverse the membrane as a helical segment. Over lysine 451–phenylalanine 475 the chain is Extracellular. The helical transmembrane segment at isoleucine 476 to isoleucine 496 threads the bilayer. Residues tyrosine 497–threonine 510 are Cytoplasmic-facing. A helical transmembrane segment spans residues valine 511 to valine 531. Over valine 532 to valine 552 the chain is Extracellular.

This sequence belongs to the NodC/HAS family. In terms of assembly, homodimer; dimerization promotes enzymatic activity. Forms heterodimer with HAS3. Forms heterodimer with HAS1. It depends on Mg(2+) as a cofactor. Phosphorylation at Thr-328 is essential for hyaluronan synthase activity. In terms of processing, O-GlcNAcylation at Ser-221 increases the stability of HAS2 and plasma membrane localization. Post-translationally, ubiquitination at Lys-190; this ubiquitination is essential for hyaluronan synthase activity and homo- or hetero-oligomerization. Can also be poly-ubiquitinated. Deubiquitinated by USP17L22/USP17 and USP4. USP17L22/USP17 efficiently removes 'Lys-63'- and 'Lys-48'-linked polyubiquitin chains, whereas USP4 preferentially removes monoubiquitination and, partially, both 'Lys-63'- and 'Lys-48'-linked polyubiquitin chain.

It is found in the cell membrane. The protein resides in the endoplasmic reticulum membrane. The protein localises to the vesicle. Its subcellular location is the golgi apparatus membrane. It localises to the lysosome. It carries out the reaction [hyaluronan](n) + UDP-N-acetyl-alpha-D-glucosamine = N-acetyl-beta-D-glucosaminyl-(1-&gt;4)-[hyaluronan](n) + UDP + H(+). It catalyses the reaction N-acetyl-beta-D-glucosaminyl-(1-&gt;4)-[hyaluronan](n) + UDP-alpha-D-glucuronate = [hyaluronan](n+1) + UDP + H(+). Its pathway is glycan biosynthesis; hyaluronan biosynthesis. In terms of biological role, catalyzes the addition of GlcNAc or GlcUA monosaccharides to the nascent hyaluronan polymer. Therefore, it is essential to hyaluronan synthesis a major component of most extracellular matrices that has a structural role in tissues architectures and regulates cell adhesion, migration and differentiation. This is one of three isoenzymes responsible for cellular hyaluronan synthesis and it is particularly responsible for the synthesis of high molecular mass hyaluronan. In Rattus norvegicus (Rat), this protein is Hyaluronan synthase 2 (Has2).